The primary structure comprises 341 residues: Protein pelota homolog (341 aa).

It belongs to the eukaryotic release factor 1 family. Pelota subfamily. As to quaternary structure, monomer. The cofactor is a divalent metal cation.

The protein resides in the cytoplasm. Functionally, may function in recognizing stalled ribosomes, interact with stem-loop structures in stalled mRNA molecules, and effect endonucleolytic cleavage of the mRNA. May play a role in the release non-functional ribosomes and degradation of damaged mRNAs. Has endoribonuclease activity. In Sulfurisphaera tokodaii (strain DSM 16993 / JCM 10545 / NBRC 100140 / 7) (Sulfolobus tokodaii), this protein is Protein pelota homolog.